Here is a 319-residue protein sequence, read N- to C-terminus: Myoblast determination protein 1 (319 aa).

Met-1 participates in a covalent cross-link: Peptide (Met-Gly) (interchain with G-Cter in ubiquitin). At Lys-104 the chain carries N6-methyllysine; by EHMT2. The bHLH domain occupies 109-160 (DRRKAATMRERRRLSKVNEAFETLKRCTSSNPNQRLPKVEILRNAIRYIEGL). Disordered stretches follow at residues 174 to 221 (AAAA…SGAR) and 266 to 319 (APAL…YQVL). 2 stretches are compositionally biased toward polar residues: residues 197-207 (SDASSPRSNCS) and 308-319 (ASANPNPIYQVL).

Efficient DNA binding requires dimerization with another bHLH protein. Seems to form active heterodimers with ITF-2. Interacts with SUV39H1. Interacts with DDX5. Interacts with CHD2. Interacts with TSC22D3. Interacts with SETD3. Interacts with P-TEFB complex; promotes the transcriptional activity of MYOD1 through its CDK9-mediated phosphorylation. Interacts with CSRP3. Interacts with NUPR1. Phosphorylated by CDK9. This phosphorylation promotes its function in muscle differentiation. Post-translationally, acetylated by a complex containing EP300 and PCAF. The acetylation is essential to activate target genes. Conversely, its deacetylation by SIRT1 inhibits its function. In terms of processing, ubiquitinated on the N-terminus; which is required for proteasomal degradation. Methylation at Lys-104 by EHMT2/G9a inhibits myogenic activity.

It localises to the nucleus. Functionally, acts as a transcriptional activator that promotes transcription of muscle-specific target genes and plays a role in muscle differentiation. Together with MYF5 and MYOG, co-occupies muscle-specific gene promoter core region during myogenesis. Induces fibroblasts to differentiate into myoblasts. Interacts with and is inhibited by the twist protein. This interaction probably involves the basic domains of both proteins. This Sus scrofa (Pig) protein is Myoblast determination protein 1 (MYOD1).